Consider the following 53-residue polypeptide: Bowman-Birk type proteinase inhibitor 1 (53 aa).

5 disulfides stabilise this stretch: C9–C24, C12–C51, C14–C22, C31–C38, and C40–C48.

In terms of assembly, dimer.

In terms of biological role, inhibits trypsin (IC(50)=6.20 nM), neutrophil elastase (ELANE) and, to a lesser extent, alpha-chymotrypsin (IC(50)=3.44 uM). The polypeptide is Bowman-Birk type proteinase inhibitor 1 (Lathyrus sativus (White vetchling)).